The sequence spans 415 residues: Tyrosine--tRNA ligase (415 aa).

An L-tyrosine-binding site is contributed by tyrosine 33. The 'HIGH' region motif lies at 38-47; sequence PSGESLHLGN. L-tyrosine is bound by residues tyrosine 161 and glutamine 165. Positions 225–229 match the 'KMSKS' region motif; that stretch reads KFGKS. Lysine 228 is an ATP binding site. Positions 350-414 constitute an S4 RNA-binding domain; the sequence is MVIDFLLQAK…KKNYFIVVWK (65 aa).

This sequence belongs to the class-I aminoacyl-tRNA synthetase family. TyrS type 1 subfamily. As to quaternary structure, homodimer.

Its subcellular location is the cytoplasm. The enzyme catalyses tRNA(Tyr) + L-tyrosine + ATP = L-tyrosyl-tRNA(Tyr) + AMP + diphosphate + H(+). Its function is as follows. Catalyzes the attachment of tyrosine to tRNA(Tyr) in a two-step reaction: tyrosine is first activated by ATP to form Tyr-AMP and then transferred to the acceptor end of tRNA(Tyr). This Mycoplasmoides gallisepticum (strain R(low / passage 15 / clone 2)) (Mycoplasma gallisepticum) protein is Tyrosine--tRNA ligase.